A 277-amino-acid polypeptide reads, in one-letter code: Probable septum site-determining protein MinC (277 aa).

The interval 137 to 164 (ATTGNAPAEPAPAEPAAPAAAPQPPAVP) is disordered. Over residues 145–164 (EPAPAEPAAPAAAPQPPAVP) the composition is skewed to pro residues.

This sequence belongs to the MinC family. As to quaternary structure, interacts with MinD and FtsZ.

Its function is as follows. Cell division inhibitor that blocks the formation of polar Z ring septums. Rapidly oscillates between the poles of the cell to destabilize FtsZ filaments that have formed before they mature into polar Z rings. Prevents FtsZ polymerization. The chain is Probable septum site-determining protein MinC from Bordetella petrii (strain ATCC BAA-461 / DSM 12804 / CCUG 43448).